The following is a 507-amino-acid chain: GMP synthase [glutamine-hydrolyzing] 1 (507 aa).

Residues 4 to 193 (KIIILDFGSQ…VVDVCGCKQD (190 aa)) form the Glutamine amidotransferase type-1 domain. Cys79 (nucleophile) is an active-site residue. Residues His167 and Glu169 contribute to the active site. The GMPS ATP-PPase domain occupies 194–382 (WSPASFIEST…LGMPEHLITR (189 aa)). Residue 221–227 (SGGVDSS) participates in ATP binding.

In terms of assembly, homodimer.

It catalyses the reaction XMP + L-glutamine + ATP + H2O = GMP + L-glutamate + AMP + diphosphate + 2 H(+). Its pathway is purine metabolism; GMP biosynthesis; GMP from XMP (L-Gln route): step 1/1. In terms of biological role, catalyzes the synthesis of GMP from XMP. In Bacteroides thetaiotaomicron (strain ATCC 29148 / DSM 2079 / JCM 5827 / CCUG 10774 / NCTC 10582 / VPI-5482 / E50), this protein is GMP synthase [glutamine-hydrolyzing] 1 (guaA1).